Consider the following 133-residue polypeptide: Cytochrome b5 (133 aa).

Residues 4-86 (EKEYILDEIS…LKNYLVGNFK (83 aa)) form the Cytochrome b5 heme-binding domain. Histidine 45 and histidine 69 together coordinate heme. The chain crosses the membrane as a helical span at residues 108-128 (SGTGIMLIVLMALFAIAYGYY).

It belongs to the cytochrome b5 family. In terms of assembly, interacts with alternative squalene epoxidase PHATRDRAFT_45494.

The protein resides in the endoplasmic reticulum membrane. Functionally, hemoprotein that functions as an electron carrier for membrane bound monooxygenases involved in sterol biosynthesis. This is Cytochrome b5 from Phaeodactylum tricornutum (strain CCAP 1055/1).